The chain runs to 1133 residues: Early transcription factor large subunit homolog (1133 aa).

Residues 52–352 form the Helicase ATP-binding domain; it reads KGGRAFFPCD…PNGQPLQRQQ (301 aa). ATP is bound at residue 99–106; that stretch reads WQTGTGKS. The DEAH box motif lies at 281–284; sequence DEIH. The Helicase C-terminal domain occupies 524 to 724; sequence MMKDILSIIR…EGDKALRKHA (201 aa).

It belongs to the DEAD box helicase family. DEAH subfamily.

The protein localises to the virion. The catalysed reaction is ATP + H2O = ADP + phosphate + H(+). Putative initation factor. This Ornithodoros (relapsing fever ticks) protein is Early transcription factor large subunit homolog.